Consider the following 1027-residue polypeptide: Presequence protease, mitochondrial (1027 aa).

Residues 1–22 (MIRQCRAGLRLCRALYQTSYRW) constitute a mitochondrion transit peptide. H98 is a Zn(2+) binding site. E101 functions as the Proton acceptor in the catalytic mechanism. Zn(2+)-binding residues include H102 and E199. A disulfide bridge links C113 with C550. The segment at 800–829 (KKERKSIRPHVVEKSSSPSSSGSEISRRAT) is disordered. Residues 814 to 823 (SSSPSSSGSE) show a composition bias toward low complexity.

The protein belongs to the peptidase M16 family. PreP subfamily. In terms of assembly, monomer and homodimer; homodimerization is induced by binding of the substrate. It depends on Zn(2+) as a cofactor. A disulfide bond locks the enzyme in the closed conformation preventing substrate entry into the catalytic chamber.

The protein localises to the mitochondrion matrix. Its activity is regulated as follows. Mainly exists in a closed and catalytically competent conformation but a closed-to-open switch allows substrate entry into the catalytic chamber. Substrate binding induces closure and dimerization. A disulfide bond may lock the enzyme in a closed conformation preventing substrate entry into the catalytic chamber, participating in redox regulation of the enzyme. Inhibited by metal-chelating agents. Inhibited by nickel and zinc excess, and slightly activated by manganese. Metalloendopeptidase of the mitochondrial matrix that functions in peptide cleavage and degradation rather than in protein processing. Has an ATP-independent activity. Specifically cleaves peptides in the range of 5 to 65 residues. Shows a preference for cleavage after small polar residues and before basic residues, but without any positional preference. Degrades the transit peptides of mitochondrial proteins after their cleavage. Also degrades other unstructured peptides. This is Presequence protease, mitochondrial (pitrm1) from Xenopus tropicalis (Western clawed frog).